Here is a 166-residue protein sequence, read N- to C-terminus: UPF0134 protein MPN_138 (166 aa).

This sequence belongs to the UPF0134 family.

This chain is UPF0134 protein MPN_138, found in Mycoplasma pneumoniae (strain ATCC 29342 / M129 / Subtype 1) (Mycoplasmoides pneumoniae).